We begin with the raw amino-acid sequence, 628 residues long: MSNGLPISIGRPCTHDSQRSLSAPDSRIHSGFNSLLDTDLPMVHSEGTSTPTQLLRHPNIWFGNLPPPPRRPQDNRDFSPLHPLVFPGHHSQLRHVHETQQVQQTCPGKLKLSGAEELPPAPQRQHSLPLHITRPSRFPHHFHARRPDVLPSVPDHGPVLTETKPRTSVRQPRSATRGPSFRPILLPKVVHVHDDPPHSSLRPRGSRSRQLQPTVRRPLLAPNQFHSPRQPPPLSDDPGILGPRPLAPHSTRDPPPRPITPGPSNTHDLRPLSVLPRTSPRRGLLPNPRRHRTSTGHIPPTTTSRPTGPPSRLQRPVHLYQSSPHTPNFRPSSIRKDALLQTGPRLGHLERLGQPANLRTSERSPPTKRRLPRSSEPNRLPKPLPEATLAPSYRHRRPYPLLPNPPAALPSIAYTSSRGKIHHSLPKGALPKEGAPPPPRRLPSPAPRPQLPLRDLGRTPGFPTPPKTPTRTPESRITASPTDIAPLDSDPVLSVRTEVHAPERRTFMDPEALRSALASLPSPPRSVGIIHTAPQTVLPANPPSPTRHLPPTSPPWILQSPVGEDAIVDSEDDSISSFHSHDFDSPSGPLRSQSPSRFRLHLRSPSTSSGIEPWSPASYDYGSAPDTD.

5 disordered regions span residues 1 to 25, 141 to 332, 346 to 404, 418 to 493, and 535 to 628; these read MSNG…SAPD, HFHA…FRPS, LGHL…LLPN, RGKI…DPVL, and QTVL…PDTD. The segment covering 299–312 has biased composition (low complexity); sequence PPTTTSRPTGPPSR. A compositionally biased stretch (polar residues) spans 320–331; that stretch reads YQSSPHTPNFRP. The segment covering 434–450 has biased composition (pro residues); the sequence is GAPPPPRRLPSPAPRPQ.

This sequence belongs to the tymoviridae protein p69 family.

Its function is as follows. Acts as a suppressor of RNA-mediated gene silencing, also known as post-transcriptional gene silencing (PTGS), a mechanism of plant viral defense that limits the accumulation of viral RNAs. The protein is 69 kDa protein of Brassica (Chinese cabbage).